Consider the following 277-residue polypeptide: F-actin-capping protein subunit beta isoforms 1 and 2 (277 aa).

The residue at position 2 (Ser-2) is an N-acetylserine.

It belongs to the F-actin-capping protein beta subunit family. In terms of assembly, component of the F-actin capping complex, composed of a heterodimer of an alpha and a beta subunit. Component of the WASH complex. As to quaternary structure, component of the F-actin capping complex, composed of a heterodimer of an alpha and a beta subunit. Subunit of dynactin, a multiprotein complex part of a tripartite complex with dynein and a adapter, such as BICDL1, BICD2 or HOOK3. The dynactin complex is built around ACTR1A/ACTB filament and consists of an actin-related filament composed of a shoulder domain, a pointed end and a barbed end. Its length is defined by its flexible shoulder domain. As to expression, isoform 1 is detected in pectoral muscle, cardiac muscle and gizzard. Isoform 2 is detected in brain and liver (at protein level). Isoform 2 is the predominant isoform of nonmuscle tissues and isoform 1 is the predominant isoform of muscle tissues.

The protein localises to the cytoplasm. Its subcellular location is the myofibril. It is found in the sarcomere. It localises to the z line. The protein resides in the i band. The protein localises to the cytoskeleton. F-actin-capping proteins bind in a Ca(2+)-independent manner to the fast growing ends of actin filaments (barbed end) thereby blocking the exchange of subunits at these ends. Unlike other capping proteins (such as gelsolin and severin), these proteins do not sever actin filaments. May play a role in the regulation of cell morphology and cytoskeletal organization. Functionally, forms, with CAPZB, the barbed end of the fast growing ends of actin filaments in the dynactin complex and stabilizes dynactin structure. The dynactin multiprotein complex activates the molecular motor dynein for ultra-processive transport along microtubules. This chain is F-actin-capping protein subunit beta isoforms 1 and 2 (CAPZB), found in Gallus gallus (Chicken).